The following is a 331-amino-acid chain: Lipoyl synthase (331 aa).

The [4Fe-4S] cluster site is built by cysteine 60, cysteine 65, cysteine 71, cysteine 86, cysteine 90, cysteine 93, and serine 301. Positions tryptophan 72–leucine 290 constitute a Radical SAM core domain.

This sequence belongs to the radical SAM superfamily. Lipoyl synthase family. The cofactor is [4Fe-4S] cluster.

It is found in the cytoplasm. It catalyses the reaction [[Fe-S] cluster scaffold protein carrying a second [4Fe-4S](2+) cluster] + N(6)-octanoyl-L-lysyl-[protein] + 2 oxidized [2Fe-2S]-[ferredoxin] + 2 S-adenosyl-L-methionine + 4 H(+) = [[Fe-S] cluster scaffold protein] + N(6)-[(R)-dihydrolipoyl]-L-lysyl-[protein] + 4 Fe(3+) + 2 hydrogen sulfide + 2 5'-deoxyadenosine + 2 L-methionine + 2 reduced [2Fe-2S]-[ferredoxin]. Its pathway is protein modification; protein lipoylation via endogenous pathway; protein N(6)-(lipoyl)lysine from octanoyl-[acyl-carrier-protein]: step 2/2. Functionally, catalyzes the radical-mediated insertion of two sulfur atoms into the C-6 and C-8 positions of the octanoyl moiety bound to the lipoyl domains of lipoate-dependent enzymes, thereby converting the octanoylated domains into lipoylated derivatives. The polypeptide is Lipoyl synthase (Deinococcus radiodurans (strain ATCC 13939 / DSM 20539 / JCM 16871 / CCUG 27074 / LMG 4051 / NBRC 15346 / NCIMB 9279 / VKM B-1422 / R1)).